The primary structure comprises 126 residues: DNA-directed RNA polymerase subunit omega (126 aa).

Belongs to the RNA polymerase subunit omega family. As to quaternary structure, the RNAP catalytic core consists of 2 alpha, 1 beta, 1 beta' and 1 omega subunit. When a sigma factor is associated with the core the holoenzyme is formed, which can initiate transcription.

It carries out the reaction RNA(n) + a ribonucleoside 5'-triphosphate = RNA(n+1) + diphosphate. Functionally, promotes RNA polymerase assembly. Latches the N- and C-terminal regions of the beta' subunit thereby facilitating its interaction with the beta and alpha subunits. The protein is DNA-directed RNA polymerase subunit omega of Paramagnetospirillum magneticum (strain ATCC 700264 / AMB-1) (Magnetospirillum magneticum).